A 96-amino-acid chain; its full sequence is Small ribosomal subunit protein uS17 (96 aa).

It belongs to the universal ribosomal protein uS17 family. Part of the 30S ribosomal subunit.

Functionally, one of the primary rRNA binding proteins, it binds specifically to the 5'-end of 16S ribosomal RNA. This chain is Small ribosomal subunit protein uS17, found in Deinococcus radiodurans (strain ATCC 13939 / DSM 20539 / JCM 16871 / CCUG 27074 / LMG 4051 / NBRC 15346 / NCIMB 9279 / VKM B-1422 / R1).